Reading from the N-terminus, the 283-residue chain is Apidaecins type 73 (283 aa).

An N-terminal signal peptide occupies residues 1 to 18 (KNFALAILVVTFVVAVFG). 9 propeptides span residues 19–41 (NTNL…EAEP), 62–69 (EAEPEAEP), 90–97 (EAELEAEP), 118–125 (EAEPEAEP), 146–153 (EAELEAEP), 174–181 (EAEPEAEP), 202–209 (EAEPEAEP), 230–237 (EAEPEAEP), and 258–265 (EAKPEAKP). A disordered region spans residues 19–283 (NTNLDPPTRP…PQPRPPHPRI (265 aa)). Residues 273–283 (IPQPRPPHPRI) show a composition bias toward pro residues.

The protein belongs to the apidaecin family.

Its subcellular location is the secreted. In terms of biological role, apidaecins have bactericidal activity; predominantly against Gram-negative bacteria. They seem to interfere with cell propagation. The sequence is that of Apidaecins type 73 (APID73) from Apis mellifera (Honeybee).